A 209-amino-acid polypeptide reads, in one-letter code: Ribosomal RNA large subunit methyltransferase E (209 aa).

Residues G63, W65, D83, D99, and D124 each coordinate S-adenosyl-L-methionine. Residue K164 is the Proton acceptor of the active site.

This sequence belongs to the class I-like SAM-binding methyltransferase superfamily. RNA methyltransferase RlmE family.

It is found in the cytoplasm. It catalyses the reaction uridine(2552) in 23S rRNA + S-adenosyl-L-methionine = 2'-O-methyluridine(2552) in 23S rRNA + S-adenosyl-L-homocysteine + H(+). In terms of biological role, specifically methylates the uridine in position 2552 of 23S rRNA at the 2'-O position of the ribose in the fully assembled 50S ribosomal subunit. This Vibrio cholerae serotype O1 (strain ATCC 39541 / Classical Ogawa 395 / O395) protein is Ribosomal RNA large subunit methyltransferase E.